Reading from the N-terminus, the 810-residue chain is Volume-regulated anion channel subunit LRRC8A (810 aa).

Methionine 1 carries the post-translational modification N-acetylmethionine. Over 1 to 22 (MIPVTELRYFADTQPAYRILKP) the chain is Cytoplasmic. Residues 23–47 (WWDVFTDYISIVMLMIAVFGGTLQV) form a helical membrane-spanning segment. The Extracellular portion of the chain corresponds to 48-123 (TQDKMICLPC…YENRLHWFAK (76 aa)). Cystine bridges form between cysteine 54-cysteine 310, cysteine 57-cysteine 65, and cysteine 113-cysteine 295. N-linked (GlcNAc...) asparagine glycans are attached at residues asparagine 66 and asparagine 83. A helical membrane pass occupies residues 124–142 (YFPYLVLLHTLIFLACSNF). Topologically, residues 143-264 (WFKFPRTSSK…EEGDIVYRLY (122 aa)) are cytoplasmic. At threonine 200 the chain carries Phosphothreonine. The residue at position 202 (serine 202) is a Phosphoserine. A Phosphothreonine modification is found at threonine 215. Serine 217 carries the phosphoserine modification. The helical transmembrane segment at 265 to 286 (MRQTIIKVIKFFLIICYTVYYV) threads the bilayer. Over 287-316 (HNIKFDVDCTVDIESLTGYRTYRCAHPLAT) the chain is Extracellular. Residues 317-341 (LFKILASFYISLVIFYGLICMYTLW) form a helical membrane-spanning segment. Topologically, residues 342 to 810 (WMLRRSLKKY…RLWRADKEQA (469 aa)) are cytoplasmic. LRR repeat units lie at residues 399–422 (ENKL…RLTK), 423–445 (NAQD…VFDL), 447–468 (ELEV…IAQL), 469–492 (TGLK…AFLR), 493–515 (ENLR…IYSL), 518–542 (LEEL…GLRE), 543–565 (LKRL…VTDV), 567–589 (VHLQ…SLKK), 590–613 (MVNL…IFSL), 614–637 (HNLQ…SFQH), 639–661 (HRLT…IGNL), 662–684 (TNLE…LFYC), 686–707 (KLRY…IGLL), 708–730 (QNLQ…LFQC), 732–753 (KLRA…VGEL), 754–776 (TNLT…LGEC), and 778–801 (LLKR…VKER). The short motif at 706–707 (LL) is the Di-leucine motif element.

It belongs to the LRRC8 family. In terms of assembly, heterohexamer; oligomerizes with other LRRC8 proteins (LRRC8B, LRRC8C, LRRC8D and/or LRRC8E) to form a heterohexamer. Can form homohexamers in vitro, but these have lower conductance than heterohexamers. Detected in a channel complex that contains LRRC8A, LRRC8C and LRRC8E. In vivo, the subunit composition may depend primarily on expression levels, and heterooligomeric channels containing various proportions of the different LRRC8 proteins may coexist. Interact with GRB2. Interacts with NOX4; this interaction prevents the ubiquitin-mediated degradation of LRRC8A. In terms of processing, N-glycosylated.

Its subcellular location is the cell membrane. It is found in the lysosome membrane. The catalysed reaction is chloride(in) = chloride(out). It carries out the reaction iodide(out) = iodide(in). It catalyses the reaction taurine(out) = taurine(in). The enzyme catalyses L-aspartate(out) = L-aspartate(in). The catalysed reaction is L-glutamate(out) = L-glutamate(in). It carries out the reaction myo-inositol(out) = myo-inositol(in). It catalyses the reaction 2',3'-cGAMP(out) = 2',3'-cGAMP(in). Inhibited by (4-[(2-butyl-6,7-dichloro-2-cyclopentyl-2,3-dihydro-1-oxo-1H-inden-5-yl)oxy]butanoic acid), which plugs the channel like a cork in a bottle by binding in the extracellular selectivity filter and sterically occluding ion conduction. Lipids may block conduction in closed heterohexameric channels. Essential component of the volume-regulated anion channel (VRAC, also named VSOAC channel), an anion channel required to maintain a constant cell volume in response to extracellular or intracellular osmotic changes. The VRAC channel conducts iodide better than chloride and can also conduct organic osmolytes like taurine. Mediates efflux of amino acids, such as aspartate and glutamate, in response to osmotic stress. In complex with LRRC8C or LRRC8E, acts as a transporter of immunoreactive cyclic dinucleotide GMP-AMP (2'-3'-cGAMP), an immune messenger produced in response to DNA virus in the cytosol: mediates both import and export of 2'-3'-cGAMP, thereby promoting transfer of 2'-3'-cGAMP to bystander cells. In contrast, complexes containing LRRC8D inhibit transport of 2'-3'-cGAMP. Required for in vivo channel activity, together with at least one other family member (LRRC8B, LRRC8C, LRRC8D or LRRC8E); channel characteristics depend on the precise subunit composition. Can form functional channels by itself (in vitro). Involved in B-cell development: required for the pro-B cell to pre-B cell transition. Also required for T-cell development. Required for myoblast differentiation: VRAC activity promotes membrane hyperpolarization and regulates insulin-stimulated glucose metabolism and oxygen consumption. Also acts as a regulator of glucose-sensing in pancreatic beta cells: VRAC currents, generated in response to hypotonicity- or glucose-induced beta cell swelling, depolarize cells, thereby causing electrical excitation, leading to increase glucose sensitivity and insulin secretion. Also plays a role in lysosome homeostasis by forming functional lysosomal VRAC channels in response to low cytoplasmic ionic strength condition: lysosomal VRAC channels are necessary for the formation of large lysosome-derived vacuoles, which store and then expel excess water to maintain cytosolic water homeostasis. Acts as a key factor in NLRP3 inflammasome activation by modulating itaconate efflux and mitochondria function. The polypeptide is Volume-regulated anion channel subunit LRRC8A (Rattus norvegicus (Rat)).